The chain runs to 206 residues: Ribosomal RNA small subunit methyltransferase G (206 aa).

S-adenosyl-L-methionine contacts are provided by residues Gly73, Leu78, 124-125 (VE), and Arg139.

The protein belongs to the methyltransferase superfamily. RNA methyltransferase RsmG family.

The protein resides in the cytoplasm. The enzyme catalyses guanosine(527) in 16S rRNA + S-adenosyl-L-methionine = N(7)-methylguanosine(527) in 16S rRNA + S-adenosyl-L-homocysteine. In terms of biological role, specifically methylates the N7 position of guanine in position 527 of 16S rRNA. This is Ribosomal RNA small subunit methyltransferase G from Pectobacterium atrosepticum (strain SCRI 1043 / ATCC BAA-672) (Erwinia carotovora subsp. atroseptica).